The following is a 363-amino-acid chain: Holliday junction branch migration complex subunit RuvB (363 aa).

The interval 1 to 23 (MHKDEDQRLLGPAPLPNDPDRSL) is disordered. Residues 1-184 (MHKDEDQRLL…FGIPIRLNFY (184 aa)) form a large ATPase domain (RuvB-L) region. Residues L23, R24, G65, K68, T69, T70, 131–133 (EDY), R174, Y184, and R221 contribute to the ATP site. T69 is a binding site for Mg(2+). The tract at residues 185 to 255 (TIEELEYIVQ…IADEALSRLE (71 aa)) is small ATPAse domain (RuvB-S). A head domain (RuvB-H) region spans residues 258 to 363 (HLGLDPLDRR…QTTLWDGEDD (106 aa)). 3 residues coordinate DNA: R294, R313, and R318.

It belongs to the RuvB family. As to quaternary structure, homohexamer. Forms an RuvA(8)-RuvB(12)-Holliday junction (HJ) complex. HJ DNA is sandwiched between 2 RuvA tetramers; dsDNA enters through RuvA and exits via RuvB. An RuvB hexamer assembles on each DNA strand where it exits the tetramer. Each RuvB hexamer is contacted by two RuvA subunits (via domain III) on 2 adjacent RuvB subunits; this complex drives branch migration. In the full resolvosome a probable DNA-RuvA(4)-RuvB(12)-RuvC(2) complex forms which resolves the HJ.

The protein resides in the cytoplasm. It catalyses the reaction ATP + H2O = ADP + phosphate + H(+). In terms of biological role, the RuvA-RuvB-RuvC complex processes Holliday junction (HJ) DNA during genetic recombination and DNA repair, while the RuvA-RuvB complex plays an important role in the rescue of blocked DNA replication forks via replication fork reversal (RFR). RuvA specifically binds to HJ cruciform DNA, conferring on it an open structure. The RuvB hexamer acts as an ATP-dependent pump, pulling dsDNA into and through the RuvAB complex. RuvB forms 2 homohexamers on either side of HJ DNA bound by 1 or 2 RuvA tetramers; 4 subunits per hexamer contact DNA at a time. Coordinated motions by a converter formed by DNA-disengaged RuvB subunits stimulates ATP hydrolysis and nucleotide exchange. Immobilization of the converter enables RuvB to convert the ATP-contained energy into a lever motion, pulling 2 nucleotides of DNA out of the RuvA tetramer per ATP hydrolyzed, thus driving DNA branch migration. The RuvB motors rotate together with the DNA substrate, which together with the progressing nucleotide cycle form the mechanistic basis for DNA recombination by continuous HJ branch migration. Branch migration allows RuvC to scan DNA until it finds its consensus sequence, where it cleaves and resolves cruciform DNA. In Bartonella tribocorum (strain CIP 105476 / IBS 506), this protein is Holliday junction branch migration complex subunit RuvB.